Consider the following 82-residue polypeptide: uncharacterized protein (82 aa).

This is an uncharacterized protein from Treponema pallidum (strain Nichols).